Consider the following 227-residue polypeptide: MAYPFELGFQDATSPIMEELLHFHDHTLMIVFLISSLVLYIISLMLTTKLTHTSTMDAQEIETIWTILPAIILILIALPSLRILYMMDEINDPSLTVKTMGHQWYWSYEYTDYEDLNFDSYMIPTSDLNPGELRLLEVDNRVVLPMELPIRMLISSEDVLHSWAVPSLGLKTDAIPGRLNQATLTSTRPGLYYGQCSEICGSNHSFMPIVLELVPLKHFENWSSSML.

Residues 1–14 (MAYPFELGFQDATS) lie on the Mitochondrial intermembrane side of the membrane. A helical transmembrane segment spans residues 15-45 (PIMEELLHFHDHTLMIVFLISSLVLYIISLM). Residues 46–59 (LTTKLTHTSTMDAQ) are Mitochondrial matrix-facing. A helical transmembrane segment spans residues 60 to 87 (EIETIWTILPAIILILIALPSLRILYMM). The Mitochondrial intermembrane segment spans residues 88 to 227 (DEINDPSLTV…HFENWSSSML (140 aa)). Cu cation is bound by residues His-161, Cys-196, Glu-198, Cys-200, His-204, and Met-207. Glu-198 serves as a coordination point for Mg(2+).

Belongs to the cytochrome c oxidase subunit 2 family. In terms of assembly, component of the cytochrome c oxidase (complex IV, CIV), a multisubunit enzyme composed of 14 subunits. The complex is composed of a catalytic core of 3 subunits MT-CO1, MT-CO2 and MT-CO3, encoded in the mitochondrial DNA, and 11 supernumerary subunits COX4I, COX5A, COX5B, COX6A, COX6B, COX6C, COX7A, COX7B, COX7C, COX8 and NDUFA4, which are encoded in the nuclear genome. The complex exists as a monomer or a dimer and forms supercomplexes (SCs) in the inner mitochondrial membrane with NADH-ubiquinone oxidoreductase (complex I, CI) and ubiquinol-cytochrome c oxidoreductase (cytochrome b-c1 complex, complex III, CIII), resulting in different assemblies (supercomplex SCI(1)III(2)IV(1) and megacomplex MCI(2)III(2)IV(2)). Found in a complex with TMEM177, COA6, COX18, COX20, SCO1 and SCO2. Interacts with TMEM177 in a COX20-dependent manner. Interacts with COX20. Interacts with COX16. The cofactor is Cu cation.

Its subcellular location is the mitochondrion inner membrane. The catalysed reaction is 4 Fe(II)-[cytochrome c] + O2 + 8 H(+)(in) = 4 Fe(III)-[cytochrome c] + 2 H2O + 4 H(+)(out). In terms of biological role, component of the cytochrome c oxidase, the last enzyme in the mitochondrial electron transport chain which drives oxidative phosphorylation. The respiratory chain contains 3 multisubunit complexes succinate dehydrogenase (complex II, CII), ubiquinol-cytochrome c oxidoreductase (cytochrome b-c1 complex, complex III, CIII) and cytochrome c oxidase (complex IV, CIV), that cooperate to transfer electrons derived from NADH and succinate to molecular oxygen, creating an electrochemical gradient over the inner membrane that drives transmembrane transport and the ATP synthase. Cytochrome c oxidase is the component of the respiratory chain that catalyzes the reduction of oxygen to water. Electrons originating from reduced cytochrome c in the intermembrane space (IMS) are transferred via the dinuclear copper A center (CU(A)) of subunit 2 and heme A of subunit 1 to the active site in subunit 1, a binuclear center (BNC) formed by heme A3 and copper B (CU(B)). The BNC reduces molecular oxygen to 2 water molecules using 4 electrons from cytochrome c in the IMS and 4 protons from the mitochondrial matrix. The sequence is that of Cytochrome c oxidase subunit 2 (MT-CO2) from Tamias townsendii (Townsend's chipmunk).